Here is a 45-residue protein sequence, read N- to C-terminus: Pyruvate dehydrogenase E1 component (45 aa).

As to quaternary structure, homodimer. Thiamine diphosphate is required as a cofactor.

It carries out the reaction N(6)-[(R)-lipoyl]-L-lysyl-[protein] + pyruvate + H(+) = N(6)-[(R)-S(8)-acetyldihydrolipoyl]-L-lysyl-[protein] + CO2. Functionally, the pyruvate dehydrogenase complex catalyzes the overall conversion of pyruvate to acetyl-CoA and CO(2). It contains multiple copies of three enzymatic components: pyruvate dehydrogenase (E1), dihydrolipoamide acetyltransferase (E2) and lipoamide dehydrogenase (E3). The chain is Pyruvate dehydrogenase E1 component from Azotobacter vinelandii.